Reading from the N-terminus, the 383-residue chain is Transcription termination factor Rho (383 aa).

Positions 1-22 (MTIETTTKKRPRAARPPRPRES) are disordered. Residues 8-17 (KKRPRAARPP) show a composition bias toward basic residues. One can recognise a Rho RNA-BD domain in the interval 26 to 93 (LETVAGLLDV…AEVESVNGST (68 aa)). ATP is bound by residues 132 to 137 (GKGQRG), 144 to 149 (KAGKTM), and arginine 175.

Belongs to the Rho family. In terms of assembly, homohexamer. The homohexamer assembles into an open ring structure.

Its function is as follows. Facilitates transcription termination by a mechanism that involves Rho binding to the nascent RNA, activation of Rho's RNA-dependent ATPase activity, and release of the mRNA from the DNA template. The polypeptide is Transcription termination factor Rho (Streptosporangium roseum (strain ATCC 12428 / DSM 43021 / JCM 3005 / KCTC 9067 / NCIMB 10171 / NRRL 2505 / NI 9100)).